The chain runs to 361 residues: Molybdopterin synthase catalytic subunit (361 aa).

Residues 101-102 (HR), Lys117, and 124-126 (KKE) each bind substrate.

The protein belongs to the MoaE family. MOCS2B subfamily. In terms of assembly, heterotetramer; composed of 2 small (Mocs2A) and 2 large (Mocs2B) subunits.

The protein resides in the cytoplasm. The catalysed reaction is 2 [molybdopterin-synthase sulfur-carrier protein]-C-terminal-Gly-aminoethanethioate + cyclic pyranopterin phosphate + H2O = molybdopterin + 2 [molybdopterin-synthase sulfur-carrier protein]-C-terminal Gly-Gly + 2 H(+). It functions in the pathway cofactor biosynthesis; molybdopterin biosynthesis. Its function is as follows. Catalytic subunit of the molybdopterin synthase complex, a complex that catalyzes the conversion of precursor Z into molybdopterin. Acts by mediating the incorporation of 2 sulfur atoms from thiocarboxylated Mocs2A into precursor Z to generate a dithiolene group. In Drosophila persimilis (Fruit fly), this protein is Molybdopterin synthase catalytic subunit.